A 332-amino-acid chain; its full sequence is Very-long-chain 3-oxoacyl-CoA reductase (332 aa).

The helical transmembrane segment at 15–35 (GQWALAGIGALYVATRVGAFL) threads the bilayer. The NADP(+) site is built by valine 60, aspartate 115, aspartate 123, asparagine 142, lysine 177, tyrosine 209, lysine 213, valine 242, and threonine 244. The active-site Proton donor is tyrosine 209. Lysine 213 functions as the Lowers pKa of active site Tyr in the catalytic mechanism.

It belongs to the short-chain dehydrogenases/reductases (SDR) family.

It localises to the endoplasmic reticulum membrane. It catalyses the reaction a very-long-chain (3R)-3-hydroxyacyl-CoA + NADP(+) = a very-long-chain 3-oxoacyl-CoA + NADPH + H(+). The protein operates within lipid metabolism; fatty acid biosynthesis. In terms of biological role, component of the microsomal membrane bound fatty acid elongation system, which produces the 26-carbon very long-chain fatty acids (VLCFA) from palmitate. Catalyzes the reduction of the 3-ketoacyl-CoA intermediate that is formed in each cycle of fatty acid elongation. VLCFAs serve as precursors for ceramide and sphingolipids. The sequence is that of Very-long-chain 3-oxoacyl-CoA reductase from Neurospora crassa (strain ATCC 24698 / 74-OR23-1A / CBS 708.71 / DSM 1257 / FGSC 987).